Reading from the N-terminus, the 215-residue chain is Ribose-5-phosphate isomerase A (215 aa).

Substrate is bound by residues 26–29 (TGST), 79–82 (DGAD), and 92–95 (KGGG). Catalysis depends on Glu101, which acts as the Proton acceptor. Lys119 serves as a coordination point for substrate.

It belongs to the ribose 5-phosphate isomerase family. In terms of assembly, homodimer.

The enzyme catalyses aldehydo-D-ribose 5-phosphate = D-ribulose 5-phosphate. It functions in the pathway carbohydrate degradation; pentose phosphate pathway; D-ribose 5-phosphate from D-ribulose 5-phosphate (non-oxidative stage): step 1/1. Catalyzes the reversible conversion of ribose-5-phosphate to ribulose 5-phosphate. The sequence is that of Ribose-5-phosphate isomerase A from Xylella fastidiosa (strain 9a5c).